Consider the following 290-residue polypeptide: Fructose-1,6-bisphosphatase class 1 (290 aa).

Mg(2+)-binding residues include glutamate 78, aspartate 96, leucine 98, and aspartate 99. Substrate contacts are provided by residues 99–102 (DGSS), tyrosine 201, and lysine 226. Glutamate 232 lines the Mg(2+) pocket.

It belongs to the FBPase class 1 family. As to quaternary structure, homotetramer. It depends on Mg(2+) as a cofactor.

The protein localises to the cytoplasm. The enzyme catalyses beta-D-fructose 1,6-bisphosphate + H2O = beta-D-fructose 6-phosphate + phosphate. It functions in the pathway carbohydrate biosynthesis; gluconeogenesis. The chain is Fructose-1,6-bisphosphatase class 1 from Helicobacter pylori (strain J99 / ATCC 700824) (Campylobacter pylori J99).